The chain runs to 532 residues: 2,3-bisphosphoglycerate-independent phosphoglycerate mutase (532 aa).

D15 and S65 together coordinate Mn(2+). Catalysis depends on S65, which acts as the Phosphoserine intermediate. Substrate is bound by residues H126, 156–157 (RD), R188, R194, 258–261 (RPDR), and K331. 5 residues coordinate Mn(2+): D398, H402, D439, H440, and H457.

It belongs to the BPG-independent phosphoglycerate mutase family. In terms of assembly, monomer. It depends on Mn(2+) as a cofactor.

The enzyme catalyses (2R)-2-phosphoglycerate = (2R)-3-phosphoglycerate. Its pathway is carbohydrate degradation; glycolysis; pyruvate from D-glyceraldehyde 3-phosphate: step 3/5. Functionally, catalyzes the interconversion of 2-phosphoglycerate and 3-phosphoglycerate. This chain is 2,3-bisphosphoglycerate-independent phosphoglycerate mutase, found in Synechococcus elongatus (strain ATCC 33912 / PCC 7942 / FACHB-805) (Anacystis nidulans R2).